We begin with the raw amino-acid sequence, 283 residues long: Lectin-like protein At1g53080 (283 aa).

The first 23 residues, 1–23 (MQIHKLCIFVLFISLLSSKTISA), serve as a signal peptide directing secretion. Residues 24-277 (VKFNFNRFDG…RHDIWSWSFE (254 aa)) form a legume-lectin like region. N-linked (GlcNAc...) asparagine glycans are attached at residues asparagine 84 and asparagine 138. The residue at position 247 (serine 247) is a Phosphoserine.

It belongs to the leguminous lectin family.

It localises to the secreted. The protein localises to the extracellular space. The protein resides in the apoplast. This is Lectin-like protein At1g53080 from Arabidopsis thaliana (Mouse-ear cress).